Consider the following 356-residue polypeptide: Methylthioribose-1-phosphate isomerase (356 aa).

Substrate is bound by residues 53-55 (RGA), Arg-97, and Gln-203. Asp-244 serves as the catalytic Proton donor. 254-255 (NK) serves as a coordination point for substrate.

It belongs to the eIF-2B alpha/beta/delta subunits family. MtnA subfamily.

It carries out the reaction 5-(methylsulfanyl)-alpha-D-ribose 1-phosphate = 5-(methylsulfanyl)-D-ribulose 1-phosphate. The protein operates within amino-acid biosynthesis; L-methionine biosynthesis via salvage pathway; L-methionine from S-methyl-5-thio-alpha-D-ribose 1-phosphate: step 1/6. In terms of biological role, catalyzes the interconversion of methylthioribose-1-phosphate (MTR-1-P) into methylthioribulose-1-phosphate (MTRu-1-P). The chain is Methylthioribose-1-phosphate isomerase from Rhodopirellula baltica (strain DSM 10527 / NCIMB 13988 / SH1).